The sequence spans 260 residues: Homeobox protein CDX-1 (260 aa).

The segment at residues 149–208 (KDKYRVVYTDHQRLELEKEFHYSRYITIRRKAELAAALGLTERQVKIWFQNRRAKERKVN) is a DNA-binding region (homeobox). Residues 152-173 (YRVVYTDHQRLELEKEFHYSRY) form an interaction with DNA region. An interaction with 5-mCpG DNA region spans residues 191-202 (RQVKIWFQNRRA). Residues 204–260 (ERKVNKKKLQQQSQPTSTTTPTPPAVGTPGPMGTLCSGSAPSLVSSSPLTIKEEFMP) form a disordered region. Low complexity-rich tracts occupy residues 213–223 (QQQSQPTSTTT) and 240–252 (SGSA…SSPL).

It belongs to the Caudal homeobox family.

It localises to the nucleus. Its function is as follows. Plays a role in transcriptional regulation. Involved in activated KRAS-mediated transcriptional activation of PRKD1. Binds to the PRKD1 promoter. Could play a role in the terminal differentiation of the intestine. Binds preferentially to methylated DNA. The sequence is that of Homeobox protein CDX-1 (CDX1) from Gallus gallus (Chicken).